The chain runs to 225 residues: Polyadenylate-binding protein 2 (225 aa).

Positions 1 to 36 (MADEDISLNEDQLLESMEETNGEQETEIVTETEEEG) are enriched in acidic residues. The interval 1-42 (MADEDISLNEDQLLESMEETNGEQETEIVTETEEEGSMQIDP) is disordered. Residues 14-74 (LESMEETNGE…QSEVDKQMAG (61 aa)) adopt a coiled-coil conformation. The 78-residue stretch at 96–173 (RSVYVGNVDY…RQIKVMSKRT (78 aa)) folds into the RRM domain.

The protein localises to the nucleus. Its subcellular location is the cytoplasm. In terms of biological role, involved in the 3'-end formation of mRNA precursors (pre-mRNA) by the addition of a poly(A) tail of 200-250 nt to the upstream cleavage product. Stimulates poly(A) polymerase (PAPOLA) conferring processivity on the poly(A) tail elongation reaction and also controls the poly(A) tail length. Increases the affinity of poly(A) polymerase for RNA. Binds to poly(A) and to poly(G) with high affinity. May protect the poly(A) tail from degradation. This Drosophila pseudoobscura pseudoobscura (Fruit fly) protein is Polyadenylate-binding protein 2.